We begin with the raw amino-acid sequence, 142 residues long: Pro-Viral epidermal growth factor (142 aa).

The signal sequence occupies residues 1 to 19 (MSIKYLMLLFAAMIIRSLA). At 20–104 (DSGNAIETTS…DTTTSYIPSL (85 aa)) the chain is on the extracellular side. Asn-34 carries an N-linked (GlcNAc...) asparagine; by host glycan. Cys-71 and Cys-80 form a disulfide bridge. The chain crosses the membrane as a helical span at residues 105–125 (GIVLVLVGIIITCCLLSVYMF). Over 126–142 (TRRTKLPIQDMVVLYFL) the chain is Cytoplasmic.

Belongs to the orthopoxvirus OPG019 family. As to quaternary structure, interacts with host EGFR. In terms of processing, cleaved at the cell surface by host ADAM10, thereby releasing the secreted form of VGF.

It is found in the host membrane. The protein localises to the secreted. Its function is as follows. Stimulates cellular proliferation (hyperplasia)and mobility around infected cells to promote rapid and efficient spread of infection. This effect is beneficial for virus replication in vivo, because poxviruses replicate possibly better in proliferating cells than in quiescent cells. Acts by binding host EGFR, inducing its dimerization, autophosphorylation and leading to activation of several cellular pathways regulating cell proliferation or cell survival. The activation by host EGFR of mitogen activated protein kinases (MAPK) and extracellular-signal regulated kinases (ERK) are essential for the positive effect of vaccinia growth factor on poxvirus virulence in vivo. The sequence is that of Pro-Viral epidermal growth factor (OPG019) from Cynomys gunnisoni (Gunnison's prairie dog).